The primary structure comprises 160 residues: Ribosome maturation factor RimP (160 aa).

The protein belongs to the RimP family.

Its subcellular location is the cytoplasm. In terms of biological role, required for maturation of 30S ribosomal subunits. The polypeptide is Ribosome maturation factor RimP (Orientia tsutsugamushi (strain Ikeda) (Rickettsia tsutsugamushi)).